A 245-amino-acid chain; its full sequence is 1-(5-phosphoribosyl)-5-[(5-phosphoribosylamino)methylideneamino] imidazole-4-carboxamide isomerase (245 aa).

D8 acts as the Proton acceptor in catalysis. D129 serves as the catalytic Proton donor.

It belongs to the HisA/HisF family.

It is found in the cytoplasm. The catalysed reaction is 1-(5-phospho-beta-D-ribosyl)-5-[(5-phospho-beta-D-ribosylamino)methylideneamino]imidazole-4-carboxamide = 5-[(5-phospho-1-deoxy-D-ribulos-1-ylimino)methylamino]-1-(5-phospho-beta-D-ribosyl)imidazole-4-carboxamide. It participates in amino-acid biosynthesis; L-histidine biosynthesis; L-histidine from 5-phospho-alpha-D-ribose 1-diphosphate: step 4/9. The chain is 1-(5-phosphoribosyl)-5-[(5-phosphoribosylamino)methylideneamino] imidazole-4-carboxamide isomerase from Heliobacterium modesticaldum (strain ATCC 51547 / Ice1).